We begin with the raw amino-acid sequence, 454 residues long: UDP-N-acetylmuramoylalanine--D-glutamate ligase (454 aa).

Residue G114 to T120 participates in ATP binding.

This sequence belongs to the MurCDEF family.

Its subcellular location is the cytoplasm. It carries out the reaction UDP-N-acetyl-alpha-D-muramoyl-L-alanine + D-glutamate + ATP = UDP-N-acetyl-alpha-D-muramoyl-L-alanyl-D-glutamate + ADP + phosphate + H(+). The protein operates within cell wall biogenesis; peptidoglycan biosynthesis. Cell wall formation. Catalyzes the addition of glutamate to the nucleotide precursor UDP-N-acetylmuramoyl-L-alanine (UMA). The sequence is that of UDP-N-acetylmuramoylalanine--D-glutamate ligase from Desulfitobacterium hafniense (strain Y51).